The primary structure comprises 426 residues: Histidine--tRNA ligase (426 aa).

It belongs to the class-II aminoacyl-tRNA synthetase family. As to quaternary structure, homodimer.

It is found in the cytoplasm. The enzyme catalyses tRNA(His) + L-histidine + ATP = L-histidyl-tRNA(His) + AMP + diphosphate + H(+). In Streptococcus pyogenes serotype M49 (strain NZ131), this protein is Histidine--tRNA ligase.